Reading from the N-terminus, the 545-residue chain is MSAKDVRFSGDARDRMLRGVDILANAVKVTLGPKGRNVVIEKSFGAPRITKDGVTVAKEIELDDRFENMGAQMVREVASKTNDTAGDGTTTATVLAQAIVREGAKAVAAGMNPMDLKRGIDIAAAAVVKDIGKRAKPVASSAEVAQVGTISSNGDTAIGKMIAQAMQKVGNEGVITVEENKSLETDVDIVEGMRFDRGYLSPYFVTNAEKMTAELDGAYILLHEKKLSGLQAILPLLEAVVKSGKPLLIVAEDIEGEALATLVVNRLRGGLKVAAVKAPGFGDRRKAMLEDIAILTGGQLISDDLGIKLENVTVDMLGRAKKVVIDKENTTIVNGAGKKKDIEARVGQIKAQIEETTSDYDREKLQERLAKLAGGVAVIRVGGATEIEVKEKKDRVEDALNATRAAVQEGIVPGGGTALLRAKKAVGRIANDNPDVQAGINIVLKALEAPIRQIAENAGVEGSIVVGKVLENKTETFGFDAQKEEYVDMVAKGIIDPAKVVRTALQDAASVAGLLVTTEAMVAELPKEEPAPAMPGGGGMGGMGF.

ATP contacts are provided by residues 30–33 (TLGP), K51, 87–91 (DGTTT), G415, and D496.

This sequence belongs to the chaperonin (HSP60) family. As to quaternary structure, forms a cylinder of 14 subunits composed of two heptameric rings stacked back-to-back. Interacts with the co-chaperonin GroES.

Its subcellular location is the cytoplasm. It catalyses the reaction ATP + H2O + a folded polypeptide = ADP + phosphate + an unfolded polypeptide.. Together with its co-chaperonin GroES, plays an essential role in assisting protein folding. The GroEL-GroES system forms a nano-cage that allows encapsulation of the non-native substrate proteins and provides a physical environment optimized to promote and accelerate protein folding. This chain is Chaperonin GroEL 3, found in Nitrobacter hamburgensis (strain DSM 10229 / NCIMB 13809 / X14).